The sequence spans 357 residues: Arginine kinase (357 aa).

Position 2 is an N-acetylalanine (A2). The Phosphagen kinase N-terminal domain maps to 9–91 (KLEEGFKKLE…FDPIIEDYHK (83 aa)). Residue 64-68 (GVGVY) participates in L-arginine binding. The Phosphagen kinase C-terminal domain occupies 119 to 356 (FVISTRVRCG…LELIKIEKEM (238 aa)). ATP contacts are provided by residues 122 to 126 (STRVR) and H185. E225 contacts L-arginine. R229 provides a ligand contact to ATP. C271 is an L-arginine binding site. ATP-binding positions include 280–284 (RASVH) and 309–314 (RGTRGE). E314 is a binding site for L-arginine.

Belongs to the ATP:guanido phosphotransferase family.

The catalysed reaction is L-arginine + ATP = N(omega)-phospho-L-arginine + ADP + H(+). This is Arginine kinase from Carcinus maenas (Common shore crab).